The chain runs to 206 residues: Large ribosomal subunit protein uL4 (206 aa).

The interval 42–93 is disordered; it reads KKQQGTHKTKNRSEVSRTGAKMYKQKGTGRARHHSARAPQFRGGGKAHGPVV. The span at 64-77 shows a compositional bias: basic residues; that stretch reads YKQKGTGRARHHSA.

This sequence belongs to the universal ribosomal protein uL4 family. As to quaternary structure, part of the 50S ribosomal subunit.

Functionally, one of the primary rRNA binding proteins, this protein initially binds near the 5'-end of the 23S rRNA. It is important during the early stages of 50S assembly. It makes multiple contacts with different domains of the 23S rRNA in the assembled 50S subunit and ribosome. In terms of biological role, forms part of the polypeptide exit tunnel. This Agrobacterium fabrum (strain C58 / ATCC 33970) (Agrobacterium tumefaciens (strain C58)) protein is Large ribosomal subunit protein uL4.